A 237-amino-acid chain; its full sequence is MALRKNRGSRMQRNVIAMTEPKSLNSEQYRTIRTNIEFASVDRQMKSVMITSACPGEGKSTTAANLAVVFAQQGKKVLLIDADLRKPTVHTAFFLENTVGLTSVLLKKSSMEQAVQASNEKHLDVLTSGPIPPNPAELLSSKWMKELAYEACAAYDMVIFDTPPILAVADAQILGNVADGSVLVISSGKTEKEQAAKAKEALATCKSKLLGAIMNGKKLSKHSEYGYYGTKDNFMQK.

Y228 is subject to Phosphotyrosine; by autocatalysis.

The protein belongs to the CpsD/CapB family. Autophosphorylated in vitro, which inhibits ATPase activity. Dephosphorylated by YwqE in vitro.

The enzyme catalyses L-tyrosyl-[protein] + ATP = O-phospho-L-tyrosyl-[protein] + ADP + H(+). Its function is as follows. May be involved in the regulation of capsular polysaccharide biosynthesis. Autophosphorylates in vitro. Phosphorylates and activates in vitro two UDP-glucose dehydrogenases, YwqF and TuaD, as well as the DNA-binding proteins Ssb and SsbB. This is Tyrosine-protein kinase YwqD (ywqD) from Bacillus subtilis (strain 168).